The following is a 726-amino-acid chain: MGKTNKNRIKTGISYRSLHLLISANETVKEKREAEQLPALDNDTQCLMSTGKVHILNADYSRYGVSVYDKLYGYSSSAASTIEEEDKGSGDGFKKRYMSLMQGSSQWKSRKLKQKKNAPKASAKAKAFLVRLHSEKRRHEVDFADINCLPEEIICRIIANLNDADSQRNCLLVSQEWSECAKRIIYKDVKFTSTYRVGQFVTTLRENPQYGKYVESLDLSQLKNGFINDESSTLENDVSQSSYGFEPPDIAYAGWRDWRYRKNSLYGSEMLSSIHRSRTRRSSDASSMNSSVFSHNYNRTRSSSVTSLVSRSTQTAAGSKNVVKRIRKLFSNSFRGKGQQKTHLHQNNGSGLSTLELKDEQFAAGTDSCSLRRSHLPFTNKFFLKYAHLRDLPLGYIIHLLTLCVNLKSINLSNLSLSPDFEIEELEYKRNGYVSFFPEETEEENLNGLNTFNGDRELTPKFFSDSDKPYHYYKDTQYESIIWKLDSSRDNNMFTNRRRSRKKFQLKILTNDDLCEAILSLKHMKHLNVGNVVWLMQRDMKRLIVHSMESCIIEDRCLDKIYMNFEGSGLQTNLPLAGQGLLKAMVLLQVITDMTNNCSDDQILEWFELRWIPTFRRVSQPADLVYLARACDQLHYVIQSEESPTYTRVGEVLITESHTGHYKYEISRNVNNVYLTIQIENGKPDTITDVKLKECSDRLLERVSNLRKNQLLQHTGENFFSTAGLA.

The F-box domain occupies 143 to 194; sequence FADINCLPEEIICRIIANLNDADSQRNCLLVSQEWSECAKRIIYKDVKFTST. Residues 276–295 are disordered; sequence RSRTRRSSDASSMNSSVFSH. A compositionally biased stretch (low complexity) spans 284–295; that stretch reads DASSMNSSVFSH.

Its function is as follows. F-box protein probably involved in ubiquitin conjugation pathway. The protein is F-box protein COS111 (COS111) of Kluyveromyces lactis (strain ATCC 8585 / CBS 2359 / DSM 70799 / NBRC 1267 / NRRL Y-1140 / WM37) (Yeast).